A 64-amino-acid polypeptide reads, in one-letter code: Large ribosomal subunit protein bL33c (64 aa).

It belongs to the bacterial ribosomal protein bL33 family.

The protein localises to the plastid. Its subcellular location is the chloroplast. The polypeptide is Large ribosomal subunit protein bL33c (rpl33) (Mesostigma viride (Green alga)).